The sequence spans 113 residues: uncharacterized protein (113 aa).

Disordered stretches follow at residues 1 to 22 (MGEHAIKRHMRQRKPTKHPLAQ) and 90 to 113 (DGRHTTESSFEHSSPSRSPQSDDL). Positions 90–99 (DGRHTTESSF) are enriched in basic and acidic residues. Positions 100 to 113 (EHSSPSRSPQSDDL) are enriched in low complexity.

This is an uncharacterized protein from Mycobacterium tuberculosis (strain CDC 1551 / Oshkosh).